The chain runs to 406 residues: Argininosuccinate synthase (406 aa).

ATP is bound by residues 13–21 and Ala40; that span reads AYSGGLDTS. Residues Tyr91 and Ser96 each coordinate L-citrulline. Gly121 contributes to the ATP binding site. 3 residues coordinate L-aspartate: Thr123, Asn127, and Asp128. Asn127 is a binding site for L-citrulline. L-citrulline contacts are provided by Arg131, Ser182, Ser191, Glu267, and Tyr279.

Belongs to the argininosuccinate synthase family. Type 1 subfamily. As to quaternary structure, homotetramer.

Its subcellular location is the cytoplasm. It carries out the reaction L-citrulline + L-aspartate + ATP = 2-(N(omega)-L-arginino)succinate + AMP + diphosphate + H(+). The protein operates within amino-acid biosynthesis; L-arginine biosynthesis; L-arginine from L-ornithine and carbamoyl phosphate: step 2/3. This is Argininosuccinate synthase from Brucella suis biovar 1 (strain 1330).